A 430-amino-acid chain; its full sequence is tRNA(Ile)-lysidine synthase (430 aa).

27-32 (SGGSDS) is an ATP binding site.

Belongs to the tRNA(Ile)-lysidine synthase family.

Its subcellular location is the cytoplasm. The catalysed reaction is cytidine(34) in tRNA(Ile2) + L-lysine + ATP = lysidine(34) in tRNA(Ile2) + AMP + diphosphate + H(+). In terms of biological role, ligates lysine onto the cytidine present at position 34 of the AUA codon-specific tRNA(Ile) that contains the anticodon CAU, in an ATP-dependent manner. Cytidine is converted to lysidine, thus changing the amino acid specificity of the tRNA from methionine to isoleucine. The sequence is that of tRNA(Ile)-lysidine synthase from Rickettsia prowazekii (strain Madrid E).